Here is a 229-residue protein sequence, read N- to C-terminus: Potassium/proton antiporter CemA (229 aa).

4 consecutive transmembrane segments (helical) span residues 11-31 (TTPFLYLASIVFLPWWISLFF), 118-138 (IISFVILSVCSILGNEELVIL), 158-178 (LLALTDFLFGFHTISAWELLI), and 190-210 (LLVCLFPSVLHTIYYFWTFNY).

Belongs to the CemA family.

It localises to the plastid. The protein resides in the chloroplast inner membrane. It catalyses the reaction K(+)(in) + H(+)(out) = K(+)(out) + H(+)(in). Its function is as follows. Contributes to K(+)/H(+) antiport activity by supporting proton efflux to control proton extrusion and homeostasis in chloroplasts in a light-dependent manner to modulate photosynthesis. Prevents excessive induction of non-photochemical quenching (NPQ) under continuous-light conditions. Indirectly promotes efficient inorganic carbon uptake into chloroplasts. The chain is Potassium/proton antiporter CemA from Pelargonium hortorum (Common geranium).